Reading from the N-terminus, the 136-residue chain is NADPH-dependent 7-cyano-7-deazaguanine reductase (136 aa).

The Thioimide intermediate role is filled by cysteine 53. The active-site Proton donor is the aspartate 60. Substrate is bound by residues 75 to 77 (VEL) and 94 to 95 (HE).

It belongs to the GTP cyclohydrolase I family. QueF type 1 subfamily.

The protein resides in the cytoplasm. The catalysed reaction is 7-aminomethyl-7-carbaguanine + 2 NADP(+) = 7-cyano-7-deazaguanine + 2 NADPH + 3 H(+). It participates in tRNA modification; tRNA-queuosine biosynthesis. Catalyzes the NADPH-dependent reduction of 7-cyano-7-deazaguanine (preQ0) to 7-aminomethyl-7-deazaguanine (preQ1). The protein is NADPH-dependent 7-cyano-7-deazaguanine reductase of Nostoc sp. (strain PCC 7120 / SAG 25.82 / UTEX 2576).